Here is a 1979-residue protein sequence, read N- to C-terminus: Repetitive organellar protein (1979 aa).

Positions 1–12 are enriched in basic residues; the sequence is MVFTFKNKKKKK. Disordered regions lie at residues 1 to 42 and 54 to 116; these read MVFT…DSWY and TKYK…NNYS. Basic and acidic residues-rich tracts occupy residues 13–24 and 31–42; these read EASSDKVSKESF and NNEKREKSDSWY. The span at 68–114 shows a compositional bias: low complexity; that stretch reads EDIINNNNNNNNDNNNDNNNDNNNDNNNDNNNDNNNENNNDNNNFNN. 6 coiled-coil regions span residues 127–366, 412–666, 693–876, 992–1094, 1126–1307, and 1398–1467; these read DNEL…LKDE, LKVY…EMEL, LKES…KKKQ, KKKH…YKTI, VDKI…MNIK, and IANY…LTSQ.

Its subcellular location is the host cell membrane. In Plasmodium falciparum (isolate 3D7), this protein is Repetitive organellar protein.